A 117-amino-acid chain; its full sequence is Gamma-aminobutyric acid receptor-associated protein-like 3 (117 aa).

The interaction with beta-tubulin stretch occupies residues 1–22 (MKFQYKEVHPFEYRKKEGEKIR). Positions 36–68 (APKARVPDLDRRKYLVPSDLTDGQFYLLIRKRI) are interaction with GABRG2. The Phosphatidylethanolamine amidated glycine moiety is linked to residue glycine 116. A propeptide (removed in mature form) is located at residue lysine 117.

It belongs to the ATG8 family. Interacts with GABRG2 and beta-tubulin. Post-translationally, the precursor molecule is cleaved by ATG4B to form the cytosolic form, GABARAPL3-I. This is activated by APG7L/ATG7, transferred to ATG3 and conjugated to phospholipid to form the membrane-bound form, GABARAPL3-II. ATG4B also mediates the delipidation required for GABARAPL1 recycling when autophagosomes fuse with lysosomes. Ubiquitous. Expressed at very high levels in the brain, heart, peripheral blood leukocytes, liver, kidney, placenta and skeletal muscle. Expressed at very low levels in thymus and small intestine.

The protein localises to the cytoplasm. Its subcellular location is the cytoskeleton. It is found in the cytoplasmic vesicle. It localises to the autophagosome membrane. In terms of biological role, ubiquitin-like modifier involved in autophagosome formation. Whereas LC3s are involved in elongation of the phagophore membrane, the GABARAP/GATE-16 subfamily is essential for a later stage in autophagosome maturation. In Homo sapiens (Human), this protein is Gamma-aminobutyric acid receptor-associated protein-like 3 (GABARAPL3).